Here is a 172-residue protein sequence, read N- to C-terminus: Lipoprotein signal peptidase (172 aa).

A run of 4 helical transmembrane segments spans residues 4 to 24 (LSSS…LDQV), 39 to 59 (VAIL…AFSF), 69 to 89 (WFFT…LAKL), and 93 to 113 (WTLE…NVID). Active-site residues include Asp122 and Asp140. A helical transmembrane segment spans residues 136 to 156 (FNVADMGISIGAVLLIISEFW).

Belongs to the peptidase A8 family.

The protein localises to the cell inner membrane. It catalyses the reaction Release of signal peptides from bacterial membrane prolipoproteins. Hydrolyzes -Xaa-Yaa-Zaa-|-(S,diacylglyceryl)Cys-, in which Xaa is hydrophobic (preferably Leu), and Yaa (Ala or Ser) and Zaa (Gly or Ala) have small, neutral side chains.. Its pathway is protein modification; lipoprotein biosynthesis (signal peptide cleavage). Its function is as follows. This protein specifically catalyzes the removal of signal peptides from prolipoproteins. This chain is Lipoprotein signal peptidase, found in Hydrogenovibrio crunogenus (strain DSM 25203 / XCL-2) (Thiomicrospira crunogena).